The following is a 289-amino-acid chain: 33 kDa chaperonin (289 aa).

Intrachain disulfides connect Cys-229/Cys-231 and Cys-262/Cys-265.

The protein belongs to the HSP33 family. In terms of processing, under oxidizing conditions two disulfide bonds are formed involving the reactive cysteines. Under reducing conditions zinc is bound to the reactive cysteines and the protein is inactive.

The protein localises to the cytoplasm. Redox regulated molecular chaperone. Protects both thermally unfolding and oxidatively damaged proteins from irreversible aggregation. Plays an important role in the bacterial defense system toward oxidative stress. The protein is 33 kDa chaperonin of Pectobacterium carotovorum subsp. carotovorum (strain PC1).